Consider the following 453-residue polypeptide: Divalent metal cation transporter MntH (453 aa).

11 helical membrane-spanning segments follow: residues 39 to 59, 66 to 86, 114 to 134, 146 to 166, 175 to 195, 217 to 237, 270 to 290, 310 to 330, 362 to 382, 388 to 408, and 427 to 447; these read LAFLGPGLLVAVGYMDPGNWI, AQYGYTLLFIILISSLSAMLL, AIMFWIIAELAIIATDIAEVI, IPLIVGALITVFDVFLLLFIM, AIVGTLIFTVLAIFVFEVYIS, GILYIALGIIGATIMPHNLYL, LSIAFVVNCLLLTLGAALFFG, PALGATLGGIMSTLFAVALLA, LITRSLAVIPVIICLIVFKGN, QLLVFSQVFLSIALPFSLIPL, and INIISWLLIIVLSGLNVYLII.

This sequence belongs to the NRAMP family.

It localises to the cell membrane. In terms of biological role, h(+)-stimulated, divalent metal cation uptake system. In Staphylococcus epidermidis (strain ATCC 12228 / FDA PCI 1200), this protein is Divalent metal cation transporter MntH.